The sequence spans 293 residues: Ribosomal protein L11 methyltransferase (293 aa).

S-adenosyl-L-methionine is bound by residues threonine 145, glycine 166, aspartate 188, and asparagine 229.

It belongs to the methyltransferase superfamily. PrmA family.

The protein resides in the cytoplasm. The enzyme catalyses L-lysyl-[protein] + 3 S-adenosyl-L-methionine = N(6),N(6),N(6)-trimethyl-L-lysyl-[protein] + 3 S-adenosyl-L-homocysteine + 3 H(+). Methylates ribosomal protein L11. The protein is Ribosomal protein L11 methyltransferase of Idiomarina loihiensis (strain ATCC BAA-735 / DSM 15497 / L2-TR).